The primary structure comprises 463 residues: Quinolone resistance protein NorB (463 aa).

14 helical membrane-spanning segments follow: residues 17–37 (IGIV…VNVV), 53–73 (IAVS…GGLA), 86–106 (IILN…LLLI), 107–127 (IGRL…LSII), 142–162 (YWSI…GAVA), 165–185 (LGWR…LFLI), 201–221 (FDIK…ILIT), 230–250 (SLLF…FIVL), 273–293 (TASN…NTFV), 299–319 (YSSL…LIMI), 334–354 (PMLI…LTFL), 357–377 (ILYV…LGIY), 403–423 (MASA…YAIV), and 435–455 (IALW…LLLV).

Belongs to the major facilitator superfamily. TCR/Tet family.

The protein resides in the cell membrane. Its function is as follows. Multidrug efflux pump that acts independently of NorA and is one of the factors that confers resistance against diverse quinolones and chemical compounds. This Staphylococcus aureus (strain MRSA252) protein is Quinolone resistance protein NorB (norB).